We begin with the raw amino-acid sequence, 513 residues long: Tryptophan--tRNA ligase 1 (513 aa).

The 'HIGH' region motif lies at 86–94; sequence PTGDPHIGH. Positions 393-397 match the 'KMSKS' region motif; the sequence is KMSSS.

The protein belongs to the class-I aminoacyl-tRNA synthetase family.

The protein resides in the cytoplasm. The enzyme catalyses tRNA(Trp) + L-tryptophan + ATP = L-tryptophyl-tRNA(Trp) + AMP + diphosphate + H(+). The polypeptide is Tryptophan--tRNA ligase 1 (Halobacterium salinarum (strain ATCC 700922 / JCM 11081 / NRC-1) (Halobacterium halobium)).